The primary structure comprises 641 residues: UPF0329 protein ECU11_0030 (641 aa).

Positions 358 to 387 (RQRKREEETERSVKELVGDEEKAKSKEEKA) are enriched in basic and acidic residues. The interval 358 to 444 (RQRKREEETE…KGGKKKSKGG (87 aa)) is disordered. Over residues 435 to 444 (KGGKKKSKGG) the composition is skewed to basic residues.

The protein belongs to the UPF0329 family.

The chain is UPF0329 protein ECU11_0030 from Encephalitozoon cuniculi (strain GB-M1) (Microsporidian parasite).